Here is a 157-residue protein sequence, read N- to C-terminus: uncharacterized protein (157 aa).

The stretch at 36-63 (QIEELNELCQFFNISLTYTRESLEELEN) forms a coiled coil.

This is an uncharacterized protein from Bacillus subtilis (strain 168).